Here is a 252-residue protein sequence, read N- to C-terminus: Zinc finger CCCH domain-containing protein 28 (252 aa).

Basic and acidic residues predominate over residues 1 to 21 (MSHRRDYGSDAVHVRITHDPP). Residues 1-31 (MSHRRDYGSDAVHVRITHDPPPENCFPNSGD) are disordered. C3H1-type zinc fingers lie at residues 71–99 (FFKT…HSAE) and 143–171 (NWKT…HGPS).

The polypeptide is Zinc finger CCCH domain-containing protein 28 (Arabidopsis thaliana (Mouse-ear cress)).